The chain runs to 259 residues: Glutamate 5-kinase (259 aa).

ATP is bound at residue lysine 18. Substrate contacts are provided by serine 54, aspartate 141, and asparagine 153. 173 to 174 contacts ATP; sequence SD.

Belongs to the glutamate 5-kinase family.

The protein resides in the cytoplasm. The catalysed reaction is L-glutamate + ATP = L-glutamyl 5-phosphate + ADP. The protein operates within amino-acid biosynthesis; L-proline biosynthesis; L-glutamate 5-semialdehyde from L-glutamate: step 1/2. In terms of biological role, catalyzes the transfer of a phosphate group to glutamate to form L-glutamate 5-phosphate. This is Glutamate 5-kinase from Clavibacter sepedonicus (Clavibacter michiganensis subsp. sepedonicus).